Reading from the N-terminus, the 123-residue chain is Large ribosomal subunit protein bL19 (123 aa).

It belongs to the bacterial ribosomal protein bL19 family.

This protein is located at the 30S-50S ribosomal subunit interface and may play a role in the structure and function of the aminoacyl-tRNA binding site. The chain is Large ribosomal subunit protein bL19 (rplS) from Treponema pallidum (strain Nichols).